The chain runs to 226 residues: ATP synthase F(0) complex subunit a (226 aa).

The next 6 membrane-spanning stretches (helical) occupy residues 6-26 (FASF…IILF), 68-88 (WSLM…LGLL), 97-117 (QLSM…VMGF), 138-158 (IPML…ALAV), 164-184 (ITAG…LSTI), and 189-209 (ALII…VALI).

The protein belongs to the ATPase A chain family. As to quaternary structure, component of the ATP synthase complex composed at least of ATP5F1A/subunit alpha, ATP5F1B/subunit beta, ATP5MC1/subunit c (homooctomer), MT-ATP6/subunit a, MT-ATP8/subunit 8, ATP5ME/subunit e, ATP5MF/subunit f, ATP5MG/subunit g, ATP5MK/subunit k, ATP5MJ/subunit j, ATP5F1C/subunit gamma, ATP5F1D/subunit delta, ATP5F1E/subunit epsilon, ATP5PF/subunit F6, ATP5PB/subunit b, ATP5PD/subunit d, ATP5PO/subunit OSCP. ATP synthase complex consists of a soluble F(1) head domain (subunits alpha(3) and beta(3)) - the catalytic core - and a membrane F(0) domain - the membrane proton channel (subunits c, a, 8, e, f, g, k and j). These two domains are linked by a central stalk (subunits gamma, delta, and epsilon) rotating inside the F1 region and a stationary peripheral stalk (subunits F6, b, d, and OSCP). Interacts with DNAJC30; interaction is direct.

The protein localises to the mitochondrion inner membrane. The catalysed reaction is H(+)(in) = H(+)(out). In terms of biological role, subunit a, of the mitochondrial membrane ATP synthase complex (F(1)F(0) ATP synthase or Complex V) that produces ATP from ADP in the presence of a proton gradient across the membrane which is generated by electron transport complexes of the respiratory chain. ATP synthase complex consist of a soluble F(1) head domain - the catalytic core - and a membrane F(1) domain - the membrane proton channel. These two domains are linked by a central stalk rotating inside the F(1) region and a stationary peripheral stalk. During catalysis, ATP synthesis in the catalytic domain of F(1) is coupled via a rotary mechanism of the central stalk subunits to proton translocation. With the subunit c (ATP5MC1), forms the proton-conducting channel in the F(0) domain, that contains two crucial half-channels (inlet and outlet) that facilitate proton movement from the mitochondrial intermembrane space (IMS) into the matrix. Protons are taken up via the inlet half-channel and released through the outlet half-channel, following a Grotthuss mechanism. The sequence is that of ATP synthase F(0) complex subunit a from Pan troglodytes (Chimpanzee).